The chain runs to 184 residues: UPF0398 protein BCB4264_A1614 (184 aa).

The protein belongs to the UPF0398 family.

The chain is UPF0398 protein BCB4264_A1614 from Bacillus cereus (strain B4264).